Consider the following 118-residue polypeptide: Large ribosomal subunit protein bL19 (118 aa).

This sequence belongs to the bacterial ribosomal protein bL19 family.

Functionally, this protein is located at the 30S-50S ribosomal subunit interface and may play a role in the structure and function of the aminoacyl-tRNA binding site. In Herpetosiphon aurantiacus (strain ATCC 23779 / DSM 785 / 114-95), this protein is Large ribosomal subunit protein bL19.